Here is a 180-residue protein sequence, read N- to C-terminus: Large ribosomal subunit protein uL10 (180 aa).

This sequence belongs to the universal ribosomal protein uL10 family. As to quaternary structure, part of the ribosomal stalk of the 50S ribosomal subunit. The N-terminus interacts with L11 and the large rRNA to form the base of the stalk. The C-terminus forms an elongated spine to which L12 dimers bind in a sequential fashion forming a multimeric L10(L12)X complex.

Its function is as follows. Forms part of the ribosomal stalk, playing a central role in the interaction of the ribosome with GTP-bound translation factors. This chain is Large ribosomal subunit protein uL10, found in Thermosipho africanus (strain TCF52B).